The following is a 448-amino-acid chain: Tubby-like F-box protein 3 (448 aa).

The F-box domain occupies Glu56–Lys102. A compositionally biased stretch (pro residues) spans Pro387–Ala403. Residues Pro387 to Glu406 form a disordered region.

This sequence belongs to the TUB family. In terms of tissue distribution, expressed in roots, leaves, flowers and seeds.

The protein is Tubby-like F-box protein 3 (TULP3) of Oryza sativa subsp. japonica (Rice).